Here is a 304-residue protein sequence, read N- to C-terminus: Lipid droplet-associated hydrolase (304 aa).

The Nucleophile role is filled by S119. Catalysis depends on charge relay system residues D250 and H279.

This sequence belongs to the AB hydrolase superfamily. LDAH family.

The protein localises to the lipid droplet. The catalysed reaction is a cholesterol ester + H2O = cholesterol + a fatty acid + H(+). Probable serine lipid hydrolase associated with lipid droplets. Has low cholesterol esterase activity. Appears to lack triglyceride lipase activity. Involved in cholesterol and triglyceride homeostasis; stimulates cellular triglyceride accumulation and cellular cholesterol release. This Dictyostelium discoideum (Social amoeba) protein is Lipid droplet-associated hydrolase.